Here is a 26-residue protein sequence, read N- to C-terminus: Somatostatin-1 (26 aa).

Cysteine 15 and cysteine 26 are joined by a disulfide.

It belongs to the somatostatin family.

It is found in the secreted. Functionally, somatostatin inhibits the release of somatotropin. In Amia calva (Bowfin), this protein is Somatostatin-1 (sst1).